The sequence spans 83 residues: High-potential iron-sulfur protein (83 aa).

The [4Fe-4S] cluster site is built by Cys43, Cys46, Cys61, and Cys75.

This sequence belongs to the high-potential iron-sulfur protein (HiPIP) family. As to quaternary structure, homodimer.

The protein localises to the periplasm. Functionally, specific class of high-redox-potential 4Fe-4S ferredoxins. Functions in anaerobic electron transport in most purple and in some other photosynthetic bacteria and in at least one genus (Paracoccus) of halophilic, denitrifying bacteria. In Thiocystis violacea, this protein is High-potential iron-sulfur protein.